Consider the following 248-residue polypeptide: MQTTFRRILILFVGLLVPLFFACQSNSQVDAAPSAAPQLSASPAKLDPLPYDYAALEPYIDAQTMRLHHDKHHATYVNNINETLKAYPDLQKQSVDSLIQNLNQVPEAIRTKIRNNGGGHVNHTMFWQIMAPKAGGTPTGAVAKAIDQTFGSFDAFKQQFNKAGADRFGSGWAWLVSDRQGKLSITSTANQDNPLMSNPNAYPILGNDVWEHAYYLKYQNRRAEYLTNWWNVVNWQAVNQRYAQAQRK.

Residues 1-41 form the signal peptide; the sequence is MQTTFRRILILFVGLLVPLFFACQSNSQVDAAPSAAPQLSA. His68, His123, Asp208, and His212 together coordinate Mn(2+).

This sequence belongs to the iron/manganese superoxide dismutase family. As to quaternary structure, homodimer. Requires Mn(2+) as cofactor.

The catalysed reaction is 2 superoxide + 2 H(+) = H2O2 + O2. Its function is as follows. Destroys superoxide anion radicals which are normally produced within the cells and which are toxic to biological systems. The chain is Superoxide dismutase [Mn] 1 (sodA1) from Leptolyngbya boryana (Plectonema boryanum).